The following is a 390-amino-acid chain: Neutrophil cytosol factor 1 (390 aa).

A PX domain is found at 4-125 (TFIRHIALLG…DFFKVRPDDL (122 aa)). 2 SH3 domains span residues 156–215 (IILQ…PLDS) and 226–285 (YAGE…KAGE). Residues 291–390 (QRQIRGRGAP…STKRKLTSAV (100 aa)) form a disordered region. Phosphoserine occurs at positions 304, 321, 329, and 346. The span at 374–383 (ILHRCTESTK) shows a compositional bias: basic and acidic residues.

As to quaternary structure, component of the phagocyte NADPH oxidase complex composed of an obligatory core heterodimer formed by the membrane proteins CYBA and CYBB and the cytosolic regulatory subunits NCF1/p47-phox, NCF2/p67-phox, NCF4/p40-phox and the small GTPase RAC1 or RAC2. Part of a cytosolic complex composed at least by NCF1, NCF2 and NCF4. Interacts (via C-terminus) with NCF2 (via the C-terminal SH3 domain). Interacts with NCF4. Interacts with CYBB. Interacts (via the second SH3 domain) with CYBA; interaction is phosphorylation-dependent. Interacts with NOXA1. Interacts with ADAM15. Interacts with TRAF4. Interacts with FASLG. Interacts with PARK7 (via C-terminus); the interaction is enhanced by LPS and modulates NCF1 phosphorylation and membrane translocation. Phosphorylated by PRKCD; phosphorylation induces activation of NCF1, leading to assembly and activation of the NADPH oxidase complex.

Its subcellular location is the cytoplasm. It localises to the cytosol. It is found in the membrane. In terms of biological role, subunit of the phagocyte NADPH oxidase complex that mediates the transfer of electrons from cytosolic NADPH to O2 to produce the superoxide anion (O2(-)). In the activated complex, electrons are first transferred from NADPH to flavin adenine dinucleotide (FAD) and subsequently transferred via two heme molecules to molecular oxygen, producing superoxide through an outer-sphere reaction. Activation of the NADPH oxidase complex is initiated by the assembly of cytosolic subunits of the NADPH oxidase complex with the core NADPH oxidase complex to form a complex at the plasma membrane or phagosomal membrane. This activation process is initiated by phosphorylation dependent binding of the cytosolic NCF1/p47-phox subunit to the C-terminus of CYBA/p22-phox. The protein is Neutrophil cytosol factor 1 of Mus musculus (Mouse).